The primary structure comprises 225 residues: Zinc finger protein 22 (225 aa).

The interval 1–35 (MRLGKPKGGISRSSSQGKVYENQRKTGRQRQRWGM) is disordered. K18 is modified (N6-acetyllysine). C2H2-type zinc fingers lie at residues 55–77 (YKCVECEKSFSQSSTLFQHQKIH), 83–105 (HKCADCGKSFFQSSNLIQHRRVH), 111–133 (YRCDECGERFKQSSNLIQHQRIH), 139–161 (YQCDECGRCFSQSSHLIQHQRTH), and 167–189 (YQCSECGKCFSQSSHLRQHTKVH). Positions 183–225 (RQHTKVHEEEKPRKTRGRSLRAKTHSLSSWKAGKGRRSAAGLR) are disordered. A compositionally biased stretch (basic residues) spans 195 to 206 (RKTRGRSLRAKT).

It belongs to the krueppel C2H2-type zinc-finger protein family.

The protein localises to the nucleus. Binds DNA through the consensus sequence 5'-CAATG-3'. May be involved in transcriptional regulation and may play a role in tooth formation. The chain is Zinc finger protein 22 (ZNF22) from Bos taurus (Bovine).